The sequence spans 391 residues: Ethanol acetyltransferase 1 (391 aa).

A mitochondrion-targeting transit peptide spans 1–24 (MFFTKVLNNQVANGLKQLPVHKRV). One can recognise an AB hydrolase-1 domain in the interval 48–154 (PIVFVHGIFG…DNSPIEQPHI (107 aa)). Catalysis depends on charge relay system residues serine 121, aspartate 145, and histidine 295.

The protein belongs to the AB hydrolase superfamily.

It localises to the mitochondrion. The catalysed reaction is ethanol + acetyl-CoA = ethyl acetate + CoA. It carries out the reaction acetyl-CoA + H2O = acetate + CoA + H(+). It catalyses the reaction ethyl acetate + H2O = ethanol + acetate + H(+). Its activity is regulated as follows. By ethanol. Thioesterase and esterase reactions are highly repressed in the presence of high ethanol concentrations. Functionally, alcohol acetyltransferase that catalyzes the synthesis of ethyl acetate from ethanol and acetyl-CoA. Can also function as a thioesterase by hydrolyzing acetyl-CoA in the absence of ethanol, as well as esterase hydrolyzing ethyl acetate. The sequence is that of Ethanol acetyltransferase 1 (EAT1) from Wickerhamomyces anomalus (strain ATCC 58044 / CBS 1984 / NCYC 433 / NRRL Y-366-8) (Yeast).